We begin with the raw amino-acid sequence, 1163 residues long: DNA-directed RNA polymerase subunit beta 2 (1163 aa).

The protein belongs to the RNA polymerase beta chain family. In terms of assembly, the RNAP catalytic core consists of 2 alpha, 1 beta, 1 beta' and 1 omega subunit. When a sigma factor is associated with the core the holoenzyme is formed, which can initiate transcription.

It carries out the reaction RNA(n) + a ribonucleoside 5'-triphosphate = RNA(n+1) + diphosphate. Functionally, DNA-dependent RNA polymerase catalyzes the transcription of DNA into RNA using the four ribonucleoside triphosphates as substrates. The chain is DNA-directed RNA polymerase subunit beta 2 from Nocardia farcinica (strain IFM 10152).